The following is a 228-amino-acid chain: DNA mismatch repair protein MutH (228 aa).

Belongs to the MutH family.

It localises to the cytoplasm. In terms of biological role, sequence-specific endonuclease that cleaves unmethylated GATC sequences. It is involved in DNA mismatch repair. This is DNA mismatch repair protein MutH from Yersinia pseudotuberculosis serotype O:1b (strain IP 31758).